A 604-amino-acid polypeptide reads, in one-letter code: Procollagen galactosyltransferase 1 (604 aa).

Residues 1–18 (MHLLCFFFLLLWTGPARS) form the signal peptide. N-linked (GlcNAc...) asparagine glycosylation is found at asparagine 78, asparagine 166, asparagine 363, and asparagine 561. Over residues 570–580 (RARSRKSREQE) the composition is skewed to basic and acidic residues. The segment at 570-604 (RARSRKSREQEELSSEAQNTDVLQSPLDSTARDEL) is disordered. Residues 584–597 (SEAQNTDVLQSPLD) show a composition bias toward polar residues. The short motif at 601–604 (RDEL) is the Prevents secretion from ER element.

This sequence belongs to the glycosyltransferase 25 family.

It is found in the endoplasmic reticulum lumen. It carries out the reaction (5R)-5-hydroxy-L-lysyl-[collagen] + UDP-alpha-D-galactose = (5R)-5-O-(beta-D-galactosyl)-5-hydroxy-L-lysyl-[collagen] + UDP + H(+). In terms of biological role, beta-galactosyltransferase that transfers beta-galactose to hydroxylysine residues of type I collagen. By acting on collagen glycosylation, facilitates the formation of collagen triple helix. This chain is Procollagen galactosyltransferase 1 (colgalt1), found in Danio rerio (Zebrafish).